Here is a 159-residue protein sequence, read N- to C-terminus: Endoribonuclease YbeY (159 aa).

The Zn(2+) site is built by H125, H129, and H135.

The protein belongs to the endoribonuclease YbeY family. Zn(2+) serves as cofactor.

The protein resides in the cytoplasm. In terms of biological role, single strand-specific metallo-endoribonuclease involved in late-stage 70S ribosome quality control and in maturation of the 3' terminus of the 16S rRNA. The polypeptide is Endoribonuclease YbeY (Enterococcus faecalis (strain ATCC 700802 / V583)).